A 98-amino-acid chain; its full sequence is NADH-ubiquinone oxidoreductase chain 4L (98 aa).

3 helical membrane-spanning segments follow: residues 1-21 (MPFIYINVLLAYFMSLLGLLI), 29-49 (SLLCLEGMMLSLFIMATLMTL), and 61-81 (IVLLVFAACEAAVGLALLVLI).

The protein belongs to the complex I subunit 4L family. In terms of assembly, core subunit of respiratory chain NADH dehydrogenase (Complex I) which is composed of 45 different subunits.

Its subcellular location is the mitochondrion inner membrane. It catalyses the reaction a ubiquinone + NADH + 5 H(+)(in) = a ubiquinol + NAD(+) + 4 H(+)(out). Its function is as follows. Core subunit of the mitochondrial membrane respiratory chain NADH dehydrogenase (Complex I) which catalyzes electron transfer from NADH through the respiratory chain, using ubiquinone as an electron acceptor. Part of the enzyme membrane arm which is embedded in the lipid bilayer and involved in proton translocation. This chain is NADH-ubiquinone oxidoreductase chain 4L (MT-ND4L), found in Aotus trivirgatus (Three-striped night monkey).